The chain runs to 207 residues: Large ribosomal subunit protein uL4 (207 aa).

The protein belongs to the universal ribosomal protein uL4 family. As to quaternary structure, part of the 50S ribosomal subunit.

Its function is as follows. One of the primary rRNA binding proteins, this protein initially binds near the 5'-end of the 23S rRNA. It is important during the early stages of 50S assembly. It makes multiple contacts with different domains of the 23S rRNA in the assembled 50S subunit and ribosome. In terms of biological role, forms part of the polypeptide exit tunnel. The protein is Large ribosomal subunit protein uL4 of Rickettsia africae (strain ESF-5).